Consider the following 51-residue polypeptide: 2,3,4,5-tetrahydropyridine-2,6-dicarboxylate N-succinyltransferase (51 aa).

The protein belongs to the transferase hexapeptide repeat family. As to quaternary structure, homotrimer.

The protein localises to the cytoplasm. The catalysed reaction is (S)-2,3,4,5-tetrahydrodipicolinate + succinyl-CoA + H2O = (S)-2-succinylamino-6-oxoheptanedioate + CoA. The protein operates within amino-acid biosynthesis; L-lysine biosynthesis via DAP pathway; LL-2,6-diaminopimelate from (S)-tetrahydrodipicolinate (succinylase route): step 1/3. The sequence is that of 2,3,4,5-tetrahydropyridine-2,6-dicarboxylate N-succinyltransferase (dapD) from Klebsiella oxytoca.